Consider the following 192-residue polypeptide: E3 ubiquitin-protein ligase RNF185 (192 aa).

Over residues 1 to 13 (MASKGPSASASTE) the composition is skewed to polar residues. A disordered region spans residues 1–30 (MASKGPSASASTENSNAGGPSGSSNGTGES). At 1 to 130 (MASKGPSASA…GGFQGFGFGD (130 aa)) the chain is on the cytoplasmic side. Positions 14-27 (NSNAGGPSGSSNGT) are enriched in low complexity. Residues 29–80 (ESGGQDSTFECNICLDTAKDAVISLCGHLFCWPCLHQWLETRPNRQVCPVCK) are required for ubiquitin ligase activity and protection against ER stress-induced cell death. The RING-type zinc-finger motif lies at 39–80 (CNICLDTAKDAVISLCGHLFCWPCLHQWLETRPNRQVCPVCK). Positions 90 to 123 (PLYGRGSTGQQDPREKTPPRPQGQRPEPENRGGF) are disordered. Residues 131-151 (GGFQMSFGIGAFPFGIFATAF) traverse the membrane as a helical segment. At 152–171 (NINDGRPPPAVPGTPQYVDE) the chain is on the mitochondrial intermembrane side. Residues 172 to 192 (QFLSRLFLFVALVIMFWLLIA) traverse the membrane as a helical segment.

Interacts with ATG5 and BNIP1. In terms of tissue distribution, ubiquitously expressed with high expression in testis.

It is found in the mitochondrion outer membrane. The protein resides in the endoplasmic reticulum membrane. The catalysed reaction is S-ubiquitinyl-[E2 ubiquitin-conjugating enzyme]-L-cysteine + [acceptor protein]-L-lysine = [E2 ubiquitin-conjugating enzyme]-L-cysteine + N(6)-ubiquitinyl-[acceptor protein]-L-lysine.. Its pathway is protein modification; protein ubiquitination. E3 ubiquitin-protein ligase that regulates selective mitochondrial autophagy by mediating 'Lys-63'-linked polyubiquitination of BNIP1. Acts in the endoplasmic reticulum (ER)-associated degradation (ERAD) pathway, which targets misfolded proteins that accumulate in the endoplasmic reticulum (ER) for ubiquitination and subsequent proteasome-mediated degradation. Protects cells from ER stress-induced apoptosis. Responsible for the cotranslational ubiquitination and degradation of CFTR in the ERAD pathway. Also acts as a regulator of the innate antiviral response by catalyzing 'Lys-27'-linked polyubiquitination of CGAS, thereby promoting CGAS cyclic GMP-AMP synthase activity. Preferentially associates with the E2 enzymes UBE2J1 and UBE2J2. In Mus musculus (Mouse), this protein is E3 ubiquitin-protein ligase RNF185 (Rnf185).